Reading from the N-terminus, the 339-residue chain is Glyceraldehyde-3-phosphate dehydrogenase (339 aa).

NAD(+) is bound by residues 11–12 (TI) and G110. 139 to 141 (SCN) is a D-glyceraldehyde 3-phosphate binding site. C140 serves as the catalytic Nucleophile. R168 provides a ligand contact to NAD(+). 194–195 (HG) serves as a coordination point for D-glyceraldehyde 3-phosphate. Q301 serves as a coordination point for NAD(+).

Belongs to the glyceraldehyde-3-phosphate dehydrogenase family. In terms of assembly, homotetramer.

The protein resides in the cytoplasm. It carries out the reaction D-glyceraldehyde 3-phosphate + phosphate + NADP(+) = (2R)-3-phospho-glyceroyl phosphate + NADPH + H(+). It catalyses the reaction D-glyceraldehyde 3-phosphate + phosphate + NAD(+) = (2R)-3-phospho-glyceroyl phosphate + NADH + H(+). It participates in carbohydrate degradation; glycolysis; pyruvate from D-glyceraldehyde 3-phosphate: step 1/5. This chain is Glyceraldehyde-3-phosphate dehydrogenase, found in Methanospirillum hungatei JF-1 (strain ATCC 27890 / DSM 864 / NBRC 100397 / JF-1).